The following is a 414-amino-acid chain: MANSC domain-containing protein 1 (414 aa).

A signal peptide spans 1–24 (MLFRGTSLAYSLLVISFLTPRSSA). Residues 25-369 (GQNCLTKSLE…HGLSFEKWLL (345 aa)) are Extracellular-facing. The region spanning 32–116 (SLEDVVIDIQ…LKPAKGLVTY (85 aa)) is the MANSC domain. N-linked (GlcNAc...) asparagine glycosylation is found at Asn128, Asn234, and Asn335. Residues 311–339 (FQGGSTLTSDPRHGKSSTSESSITNKTAS) form a disordered region. Over residues 326 to 338 (SSTSESSITNKTA) the composition is skewed to polar residues. A helical membrane pass occupies residues 370–392 (IGTLLCGVLFLVIGLVLLGRMLV). The Cytoplasmic portion of the chain corresponds to 393-414 (EALRRKRYSRLDYLINGIYVDI).

It localises to the membrane. The protein is MANSC domain-containing protein 1 (Mansc1) of Mus musculus (Mouse).